The following is a 125-amino-acid chain: Small ribosomal subunit protein uS12 (125 aa).

A disordered region spans residues 1-28 (MPTINQLVRKGREKVKKKSKAPALEGNP). Basic residues predominate over residues 9–20 (RKGREKVKKKSK). Position 89 is a 3-methylthioaspartic acid (aspartate 89). Residues 104–125 (AAGVKDRKQSRSKYGTKRPKEK) form a disordered region. Residues 113-125 (SRSKYGTKRPKEK) are compositionally biased toward basic residues.

The protein belongs to the universal ribosomal protein uS12 family. Part of the 30S ribosomal subunit. Contacts proteins S8 and S17. May interact with IF1 in the 30S initiation complex.

With S4 and S5 plays an important role in translational accuracy. Its function is as follows. Interacts with and stabilizes bases of the 16S rRNA that are involved in tRNA selection in the A site and with the mRNA backbone. Located at the interface of the 30S and 50S subunits, it traverses the body of the 30S subunit contacting proteins on the other side and probably holding the rRNA structure together. The combined cluster of proteins S8, S12 and S17 appears to hold together the shoulder and platform of the 30S subunit. The sequence is that of Small ribosomal subunit protein uS12 from Persephonella marina (strain DSM 14350 / EX-H1).